The chain runs to 280 residues: Phosphatidylglycerol--prolipoprotein diacylglyceryl transferase (280 aa).

A run of 4 helical transmembrane segments spans residues 23–43 (LRWY…LAGV), 58–78 (LLFW…VLFY), 93–113 (IWTG…ALWW), and 120–140 (CTFL…LGAG). Arg-141 contributes to the a 1,2-diacyl-sn-glycero-3-phospho-(1'-sn-glycerol) binding site. 3 helical membrane-spanning segments follow: residues 173–193 (PSQL…LWLY), 200–220 (IGAV…FVEF), and 241–261 (QGQI…VWAV).

This sequence belongs to the Lgt family.

The protein resides in the cell inner membrane. It carries out the reaction L-cysteinyl-[prolipoprotein] + a 1,2-diacyl-sn-glycero-3-phospho-(1'-sn-glycerol) = an S-1,2-diacyl-sn-glyceryl-L-cysteinyl-[prolipoprotein] + sn-glycerol 1-phosphate + H(+). The protein operates within protein modification; lipoprotein biosynthesis (diacylglyceryl transfer). Its function is as follows. Catalyzes the transfer of the diacylglyceryl group from phosphatidylglycerol to the sulfhydryl group of the N-terminal cysteine of a prolipoprotein, the first step in the formation of mature lipoproteins. The polypeptide is Phosphatidylglycerol--prolipoprotein diacylglyceryl transferase (Pseudoalteromonas atlantica (strain T6c / ATCC BAA-1087)).